A 231-amino-acid chain; its full sequence is tRNA (guanine-N(1)-)-methyltransferase (231 aa).

S-adenosyl-L-methionine is bound by residues G111 and L131–L136.

Belongs to the RNA methyltransferase TrmD family. In terms of assembly, homodimer.

It is found in the cytoplasm. It catalyses the reaction guanosine(37) in tRNA + S-adenosyl-L-methionine = N(1)-methylguanosine(37) in tRNA + S-adenosyl-L-homocysteine + H(+). Specifically methylates guanosine-37 in various tRNAs. This chain is tRNA (guanine-N(1)-)-methyltransferase, found in Leptospira interrogans serogroup Icterohaemorrhagiae serovar copenhageni (strain Fiocruz L1-130).